The sequence spans 255 residues: Acetylglutamate kinase (255 aa).

Substrate-binding positions include 40–41, R62, and N153; that span reads GG.

It belongs to the acetylglutamate kinase family. ArgB subfamily.

The protein localises to the cytoplasm. The catalysed reaction is N-acetyl-L-glutamate + ATP = N-acetyl-L-glutamyl 5-phosphate + ADP. It participates in amino-acid biosynthesis; L-arginine biosynthesis; N(2)-acetyl-L-ornithine from L-glutamate: step 2/4. Catalyzes the ATP-dependent phosphorylation of N-acetyl-L-glutamate. In Bacillus anthracis (strain CDC 684 / NRRL 3495), this protein is Acetylglutamate kinase.